The primary structure comprises 131 residues: Profilin (131 aa).

It belongs to the profilin family. In terms of assembly, occurs in many kinds of cells as a complex with monomeric actin in a 1:1 ratio.

The protein resides in the cytoplasm. Its subcellular location is the cytoskeleton. Its function is as follows. Binds to actin and affects the structure of the cytoskeleton. At high concentrations, profilin prevents the polymerization of actin, whereas it enhances it at low concentrations. By binding to PIP2, it inhibits the formation of IP3 and DG. The protein is Profilin of Arachis hypogaea (Peanut).